The sequence spans 1222 residues: Serine/threonine-protein kinase WNK4 (1222 aa).

Over residues 1–17 (MLAPRNTETGVHMSQTE) the composition is skewed to polar residues. The segment at 1 to 163 (MLAPRNTETG…KEDTETQAVA (163 aa)) is disordered. Residue Ser95 is modified to Phosphoserine. Residues 135–152 (EPPRVPDAAARERRREQE) are compositionally biased toward basic and acidic residues. Residues Lys154 and Lys172 each participate in a glycyl lysine isopeptide (Lys-Gly) (interchain with G-Cter in ubiquitin) cross-link. Positions 171 to 429 (LKFDIEIGRG…IQDLLTHAFF (259 aa)) constitute a Protein kinase domain. Ser181 contacts ATP. Residues Lys183, Lys223, and Lys238 each participate in a glycyl lysine isopeptide (Lys-Gly) (interchain with G-Cter in ubiquitin) cross-link. ATP is bound by residues 251 to 254 (TELM) and Lys301. Asp318 acts as the Proton acceptor in catalysis. Lys325 participates in a covalent cross-link: Glycyl lysine isopeptide (Lys-Gly) (interchain with G-Cter in ubiquitin). Ser328 and Ser332 each carry phosphoserine; by autocatalysis. Glycyl lysine isopeptide (Lys-Gly) (interchain with G-Cter in ubiquitin) cross-links involve residues Lys384, Lys390, Lys447, and Lys451. Positions 527–562 (LEVLPPDSGPPPATVSMTPGPPSAFPPEPEEPEADQ) are disordered. Positions 533-553 (DSGPPPATVSMTPGPPSAFPP) are enriched in pro residues. Residues 554–564 (EPEEPEADQHQ) are interaction with KLHL3. Position 572 is a phosphoserine (Ser572). 5 disordered regions span residues 591–612 (FLDA…PAEP), 626–679 (RSGP…SVSD), 747–809 (DAGP…GTPF), 836–873 (QVSS…SPLP), and 927–1087 (SPGL…QPSP). A compositionally biased stretch (low complexity) spans 627–638 (SGPGSDFSPGDS). Over residues 659–672 (NPVKTLRRRPRSRL) the composition is skewed to basic residues. 2 stretches are compositionally biased toward low complexity: residues 792-809 (FSTS…GTPF) and 845-873 (APSS…SPLP). Residues 935–946 (PPAPPGPLPSMP) show a composition bias toward pro residues. Over residues 953–963 (DQESLSAQTAE) the composition is skewed to polar residues. A Glycyl lysine isopeptide (Lys-Gly) (interchain with G-Cter in ubiquitin) cross-link involves residue Lys990. The RFXV motif signature appears at 996 to 999 (RFQV). A Phosphoserine modification is found at Ser1014. Basic and acidic residues predominate over residues 1044–1056 (ETREALAESDRAA). Residues 1076-1086 (GGSSPILSQPS) are compositionally biased toward polar residues. Residues Lys1123, Lys1136, and Lys1137 each participate in a glycyl lysine isopeptide (Lys-Gly) (interchain with G-Cter in ubiquitin) cross-link. The disordered stretch occupies residues 1169 to 1222 (SKGSFPTSRRNSLQRSDLPGPGIMRRNSLSGSSTGSQEQRASKGVTFAGDVGRM). 2 stretches are compositionally biased toward polar residues: residues 1172-1183 (SFPTSRRNSLQR) and 1195-1207 (NSLS…SQEQ). Residue Ser1196 is modified to Phosphoserine.

Belongs to the protein kinase superfamily. Ser/Thr protein kinase family. WNK subfamily. As to quaternary structure, interacts with the C-terminal region of KCNJ1. Interacts with WNK1 and WNK3. Interacts with KLHL3. The cofactor is Mg(2+). Post-translationally, autophosphorylated at Ser-328 and Ser-332, promoting its activation. Phosphorylated by WNK1 and WNK3. Phosphorylated at Ser-572 in a MAP3K15/ASK3-dependent process in response to osmotic stress or hypotonic low-chloride stimulation. In terms of processing, ubiquitinated by the BCR(KLHL3) complex, leading to its degradation. Also ubiquitinated by the BCR(KLHL2) complex.

Its subcellular location is the cell junction. It is found in the tight junction. It catalyses the reaction L-seryl-[protein] + ATP = O-phospho-L-seryl-[protein] + ADP + H(+). The catalysed reaction is L-threonyl-[protein] + ATP = O-phospho-L-threonyl-[protein] + ADP + H(+). Its activity is regulated as follows. Activation requires autophosphorylation of Ser-328 and Ser-332. Autophosphorylation and subsequent activation is inhibited by increases in intracellular ionic strength: Cl(-) potently inhibits WNK4 kinase activity via direct binding. Also inhibited by K(+) ions. Functionally, serine/threonine-protein kinase component of the WNK4-SPAK/OSR1 kinase cascade, which acts as a key regulator of ion transport in the distal nephron and blood pressure. The WNK4-SPAK/OSR1 kinase cascade is composed of WNK4, which mediates phosphorylation and activation of downstream kinases OXSR1/OSR1 and STK39/SPAK. Following activation, OXSR1/OSR1 and STK39/SPAK catalyze phosphorylation of ion cotransporters, such as SLC12A1/NKCC2, SLC12A2/NKCC1, SLC12A3/NCC, SLC12A5/KCC2 or SLC12A6/KCC3, regulating their activity. Acts as a molecular switch that regulates the balance between renal salt reabsorption and K(+) secretion by modulating the activities of renal transporters and channels, including the Na-Cl cotransporter SLC12A3/NCC and the K(+) channel, KCNJ1/ROMK. Regulates NaCl reabsorption in the distal nephron by activating the thiazide-sensitive Na-Cl cotransporter SLC12A3/NCC in distal convoluted tubule cells of kidney: activates SLC12A3/NCC in a OXSR1/OSR1- and STK39/SPAK-dependent process. Also acts as a scaffold protein independently of its protein kinase activity: negatively regulates cell membrane localization of various transporters and channels (CFTR, KCNJ1/ROMK, SLC4A4, SLC26A9 and TRPV4) by clathrin-dependent endocytosis. Also inhibits the activity of the epithelial Na(+) channel (ENaC) SCNN1A, SCNN1B, SCNN1D in a inase-independent mechanism. May also phosphorylate NEDD4L. The sequence is that of Serine/threonine-protein kinase WNK4 from Rattus norvegicus (Rat).